The sequence spans 394 residues: Phosphoglycerate kinase (394 aa).

Residues 21–23, Arg36, 59–62, Arg118, and Arg151 each bind substrate; these read DFN and HLGR. Phosphoserine is present on Ser183. ATP contacts are provided by Lys201 and Gly292. Thr299 bears the Phosphothreonine mark. Residues Glu323 and 350-353 each bind ATP; that span reads GGDS.

Belongs to the phosphoglycerate kinase family. Monomer.

The protein localises to the cytoplasm. It carries out the reaction (2R)-3-phosphoglycerate + ATP = (2R)-3-phospho-glyceroyl phosphate + ADP. It participates in carbohydrate degradation; glycolysis; pyruvate from D-glyceraldehyde 3-phosphate: step 2/5. The polypeptide is Phosphoglycerate kinase (Bacillus mycoides (strain KBAB4) (Bacillus weihenstephanensis)).